We begin with the raw amino-acid sequence, 327 residues long: Phenylalanine--tRNA ligase alpha subunit (327 aa).

Position 252 (E252) interacts with Mg(2+).

It belongs to the class-II aminoacyl-tRNA synthetase family. Phe-tRNA synthetase alpha subunit type 1 subfamily. In terms of assembly, tetramer of two alpha and two beta subunits. Requires Mg(2+) as cofactor.

It localises to the cytoplasm. The catalysed reaction is tRNA(Phe) + L-phenylalanine + ATP = L-phenylalanyl-tRNA(Phe) + AMP + diphosphate + H(+). In Shewanella sp. (strain MR-7), this protein is Phenylalanine--tRNA ligase alpha subunit.